Reading from the N-terminus, the 151-residue chain is Putative pre-16S rRNA nuclease (151 aa).

Belongs to the YqgF nuclease family.

It is found in the cytoplasm. In terms of biological role, could be a nuclease involved in processing of the 5'-end of pre-16S rRNA. This is Putative pre-16S rRNA nuclease from Neisseria meningitidis serogroup C (strain 053442).